The chain runs to 365 residues: MNTFGRELRITTFGESHGKAIGVVIDGVPAGLELTEEDIKRELERRMFCHIPVLNPRCEPEEVEILSGVKEGYTQGTPIAVVIWNRRVISSYYEELWMKPRPGHADFAYYLKYGRHYDHRGGGRASGRTTAAVVAAGAVAKKMLALAGAEVAGHIVELGGVEINASYTYEDVKKSWGRPLPVVDQQALDKMLEKIREAAMRGDSIGGGVEVWAVGVPPGLGEPHFGKIKADIAAAAFSIPGAIALDWGMGRALAKMWGSEANDPITVANGRPTLATNKIGGVLGGITVGTPIYFRAWFKPTPSVRKPQQTVDLAKMEPTTIEFKGRYDVSIVPKALVALEAITAVALADHLLRAGLIRRDKPLGR.

An NADP(+)-binding site is contributed by R46. FMN contacts are provided by residues 124–126, G284, 299–303, and R326; these read RAS and KPTPS.

It belongs to the chorismate synthase family. FMNH2 is required as a cofactor.

The enzyme catalyses 5-O-(1-carboxyvinyl)-3-phosphoshikimate = chorismate + phosphate. The protein operates within metabolic intermediate biosynthesis; chorismate biosynthesis; chorismate from D-erythrose 4-phosphate and phosphoenolpyruvate: step 7/7. Functionally, catalyzes the anti-1,4-elimination of the C-3 phosphate and the C-6 proR hydrogen from 5-enolpyruvylshikimate-3-phosphate (EPSP) to yield chorismate, which is the branch point compound that serves as the starting substrate for the three terminal pathways of aromatic amino acid biosynthesis. This reaction introduces a second double bond into the aromatic ring system. The protein is Chorismate synthase of Pyrobaculum neutrophilum (strain DSM 2338 / JCM 9278 / NBRC 100436 / V24Sta) (Thermoproteus neutrophilus).